Consider the following 436-residue polypeptide: MIDPQLLRKDIAAVQARLATRKFQLDVEKFNTLESERKSLQTRTEELQAKRNQLAKAIGMKKGKGEDAAAEMAEASQINVDMESGAARLSVLQAEIADFLMGIPNLPDESVPAGKDETENKEVKVWGEQPMFDFEIKDHVDLGGPLGLDFEVAAKISGSRFVVLKGPIARLHRALAQFMIDTHATHHGYQEVYAPYMVNAASMRGTGQLPKFEEDLFKVPRQMGGEDEGGEAKTENFYLIPTAEVPVTNLVRDEIVNADTLPLKFVAHTPCFRSEAGSYGRDVRGMIRQHQFDKVELVQITKPEHSMQALEELTGHAERILELLELPYRKVLLCTGDMGFGSTKTYDLEVWVPSQNAYREISSCSSMGDFQARRMQARFKAGQGKPELLHTLNGSGLAVGRALVALIENKQLVDGSIAIPKALQPYLGGLETLKPN.

242 to 244 (TAE) provides a ligand contact to L-serine. Residue 273 to 275 (RSE) participates in ATP binding. An L-serine-binding site is contributed by Glu-296. 360-363 (EISS) is a binding site for ATP. Ser-395 serves as a coordination point for L-serine.

It belongs to the class-II aminoacyl-tRNA synthetase family. Type-1 seryl-tRNA synthetase subfamily. Homodimer. The tRNA molecule binds across the dimer.

It localises to the cytoplasm. It carries out the reaction tRNA(Ser) + L-serine + ATP = L-seryl-tRNA(Ser) + AMP + diphosphate + H(+). The enzyme catalyses tRNA(Sec) + L-serine + ATP = L-seryl-tRNA(Sec) + AMP + diphosphate + H(+). The protein operates within aminoacyl-tRNA biosynthesis; selenocysteinyl-tRNA(Sec) biosynthesis; L-seryl-tRNA(Sec) from L-serine and tRNA(Sec): step 1/1. In terms of biological role, catalyzes the attachment of serine to tRNA(Ser). Is also able to aminoacylate tRNA(Sec) with serine, to form the misacylated tRNA L-seryl-tRNA(Sec), which will be further converted into selenocysteinyl-tRNA(Sec). This chain is Serine--tRNA ligase, found in Polynucleobacter asymbioticus (strain DSM 18221 / CIP 109841 / QLW-P1DMWA-1) (Polynucleobacter necessarius subsp. asymbioticus).